Consider the following 94-residue polypeptide: Pyrimidine/purine nucleoside phosphorylase (94 aa).

Belongs to the nucleoside phosphorylase PpnP family.

The enzyme catalyses a purine D-ribonucleoside + phosphate = a purine nucleobase + alpha-D-ribose 1-phosphate. It catalyses the reaction adenosine + phosphate = alpha-D-ribose 1-phosphate + adenine. The catalysed reaction is cytidine + phosphate = cytosine + alpha-D-ribose 1-phosphate. It carries out the reaction guanosine + phosphate = alpha-D-ribose 1-phosphate + guanine. The enzyme catalyses inosine + phosphate = alpha-D-ribose 1-phosphate + hypoxanthine. It catalyses the reaction thymidine + phosphate = 2-deoxy-alpha-D-ribose 1-phosphate + thymine. The catalysed reaction is uridine + phosphate = alpha-D-ribose 1-phosphate + uracil. It carries out the reaction xanthosine + phosphate = alpha-D-ribose 1-phosphate + xanthine. Functionally, catalyzes the phosphorolysis of diverse nucleosides, yielding D-ribose 1-phosphate and the respective free bases. Can use uridine, adenosine, guanosine, cytidine, thymidine, inosine and xanthosine as substrates. Also catalyzes the reverse reactions. This is Pyrimidine/purine nucleoside phosphorylase from Aeromonas salmonicida (strain A449).